The chain runs to 484 residues: Aspartyl/glutamyl-tRNA(Asn/Gln) amidotransferase subunit B (484 aa).

This sequence belongs to the GatB/GatE family. GatB subfamily. Heterotrimer of A, B and C subunits.

It carries out the reaction L-glutamyl-tRNA(Gln) + L-glutamine + ATP + H2O = L-glutaminyl-tRNA(Gln) + L-glutamate + ADP + phosphate + H(+). The enzyme catalyses L-aspartyl-tRNA(Asn) + L-glutamine + ATP + H2O = L-asparaginyl-tRNA(Asn) + L-glutamate + ADP + phosphate + 2 H(+). In terms of biological role, allows the formation of correctly charged Asn-tRNA(Asn) or Gln-tRNA(Gln) through the transamidation of misacylated Asp-tRNA(Asn) or Glu-tRNA(Gln) in organisms which lack either or both of asparaginyl-tRNA or glutaminyl-tRNA synthetases. The reaction takes place in the presence of glutamine and ATP through an activated phospho-Asp-tRNA(Asn) or phospho-Glu-tRNA(Gln). The protein is Aspartyl/glutamyl-tRNA(Asn/Gln) amidotransferase subunit B of Bordetella pertussis (strain Tohama I / ATCC BAA-589 / NCTC 13251).